Consider the following 550-residue polypeptide: Chaperonin GroEL (550 aa).

ATP-binding positions include 30 to 33 (TLGP), Lys51, 87 to 91 (DGTTT), Gly415, and Asp496. Residues 526-550 (PEDEKMPPMPPGGGMGGMGGMGGMY) form a disordered region. Residues 537–550 (GGGMGGMGGMGGMY) are compositionally biased toward gly residues.

This sequence belongs to the chaperonin (HSP60) family. Forms a cylinder of 14 subunits composed of two heptameric rings stacked back-to-back. Interacts with the co-chaperonin GroES.

The protein resides in the cytoplasm. It carries out the reaction ATP + H2O + a folded polypeptide = ADP + phosphate + an unfolded polypeptide.. Its function is as follows. Together with its co-chaperonin GroES, plays an essential role in assisting protein folding. The GroEL-GroES system forms a nano-cage that allows encapsulation of the non-native substrate proteins and provides a physical environment optimized to promote and accelerate protein folding. This Chloroherpeton thalassium (strain ATCC 35110 / GB-78) protein is Chaperonin GroEL.